Reading from the N-terminus, the 282-residue chain is ABC transporter I family member 21 (282 aa).

The 236-residue stretch at 13 to 248 (IRVSGMQFSY…KTSPNLLSVV (236 aa)) folds into the ABC transporter domain. ATP is bound at residue 46–53 (GANGSGKT).

The protein belongs to the ABC transporter superfamily. ABCI family. In terms of tissue distribution, expressed in root elongating zone and root meristem, as well as in elongating etiolated hypocotyls.

It is found in the cytoplasm. The protein is ABC transporter I family member 21 (ABCI21) of Arabidopsis thaliana (Mouse-ear cress).